Reading from the N-terminus, the 132-residue chain is Small ribosomal subunit protein uS8c (132 aa).

This sequence belongs to the universal ribosomal protein uS8 family. As to quaternary structure, part of the 30S ribosomal subunit.

It localises to the plastid. It is found in the chloroplast. One of the primary rRNA binding proteins, it binds directly to 16S rRNA central domain where it helps coordinate assembly of the platform of the 30S subunit. In Angiopteris evecta (Mule's foot fern), this protein is Small ribosomal subunit protein uS8c (rps8).